Reading from the N-terminus, the 411-residue chain is Argininosuccinate synthase (411 aa).

ATP-binding positions include 11–19 (AYSGGLDTS) and Ala37. L-citrulline-binding residues include Tyr88 and Ser93. 116–124 (SHGATGKGN) is an ATP binding site. The L-aspartate site is built by Thr120, Asn124, and Asp125. Residue Asn124 coordinates L-citrulline. L-citrulline contacts are provided by Arg128, Ser181, Ser190, Glu271, and Tyr283.

It belongs to the argininosuccinate synthase family. As to quaternary structure, homotetramer.

The protein localises to the cytoplasm. It is found in the cytosol. It catalyses the reaction L-citrulline + L-aspartate + ATP = 2-(N(omega)-L-arginino)succinate + AMP + diphosphate + H(+). The protein operates within amino-acid biosynthesis; L-arginine biosynthesis; L-arginine from L-ornithine and carbamoyl phosphate: step 2/3. It functions in the pathway nitrogen metabolism; urea cycle; (N(omega)-L-arginino)succinate from L-aspartate and L-citrulline: step 1/1. Its function is as follows. One of the enzymes of the urea cycle, the metabolic pathway transforming neurotoxic amonia produced by protein catabolism into inocuous urea in the liver of ureotelic animals. Catalyzes the formation of arginosuccinate from aspartate, citrulline and ATP and together with ASL it is responsible for the biosynthesis of arginine in most body tissues. The protein is Argininosuccinate synthase of Xenopus laevis (African clawed frog).